The sequence spans 677 residues: DNA ligase (677 aa).

Residues 38–42 (DYDFD), 87–88 (SL), and glutamate 121 each bind NAD(+). The N6-AMP-lysine intermediate role is filled by lysine 123. Residues arginine 144, glutamate 187, lysine 300, and lysine 324 each contribute to the NAD(+) site. Zn(2+) contacts are provided by cysteine 418, cysteine 421, cysteine 436, and cysteine 442. The 77-residue stretch at 601–677 (LINSNFEGLS…ISEEEFEAML (77 aa)) folds into the BRCT domain.

The protein belongs to the NAD-dependent DNA ligase family. LigA subfamily. Mg(2+) is required as a cofactor. Mn(2+) serves as cofactor.

The enzyme catalyses NAD(+) + (deoxyribonucleotide)n-3'-hydroxyl + 5'-phospho-(deoxyribonucleotide)m = (deoxyribonucleotide)n+m + AMP + beta-nicotinamide D-nucleotide.. Its function is as follows. DNA ligase that catalyzes the formation of phosphodiester linkages between 5'-phosphoryl and 3'-hydroxyl groups in double-stranded DNA using NAD as a coenzyme and as the energy source for the reaction. It is essential for DNA replication and repair of damaged DNA. The polypeptide is DNA ligase (Chlorobium luteolum (strain DSM 273 / BCRC 81028 / 2530) (Pelodictyon luteolum)).